The primary structure comprises 718 residues: Polyribonucleotide nucleotidyltransferase (718 aa).

Residues Asp-493 and Asp-499 each contribute to the Mg(2+) site. A KH domain is found at 560–619 (PRMITIKINPEKIRDVIGKGGSVIRALTEETGTTIDISDDGVVTIASTSSEGMAEAKKRI). An S1 motif domain is found at 629-697 (GQVYEGTVLK…EKGRVRLSAK (69 aa)).

The protein belongs to the polyribonucleotide nucleotidyltransferase family. The cofactor is Mg(2+).

The protein resides in the cytoplasm. It catalyses the reaction RNA(n+1) + phosphate = RNA(n) + a ribonucleoside 5'-diphosphate. Involved in mRNA degradation. Catalyzes the phosphorolysis of single-stranded polyribonucleotides processively in the 3'- to 5'-direction. This Paraburkholderia phytofirmans (strain DSM 17436 / LMG 22146 / PsJN) (Burkholderia phytofirmans) protein is Polyribonucleotide nucleotidyltransferase.